The following is a 213-amino-acid chain: Agglutinin isolectin 2 (213 aa).

The signal sequence occupies residues M1–A27. Residue Q28 is modified to Pyrrolidone carboxylic acid. Chitin-binding type-1 domains follow at residues Q28–T69, S70–A112, D113–T155, and D156–A198. Intrachain disulfides connect C30/C45, C39/C51, C44/C58, C62/C67, C73/C88, C82/C94, C87/C101, C105/C110, C116/C131, C125/C137, C130/C144, C148/C153, C159/C174, C168/C180, C173/C187, and C191/C196. M37–C39 serves as a coordination point for substrate. Substrate is bound at residue S89–Y100. Residue S141 to E142 participates in substrate binding. A propeptide spanning residues V199–E213 is cleaved from the precursor.

Homodimer, u-shaped.

Its function is as follows. N-acetyl-D-glucosamine / N-acetyl-D-neuraminic acid binding lectin. The protein is Agglutinin isolectin 2 of Triticum aestivum (Wheat).